Reading from the N-terminus, the 86-residue chain is Small ribosomal subunit protein uS15c (86 aa).

Belongs to the universal ribosomal protein uS15 family. In terms of assembly, part of the 30S ribosomal subunit.

Its subcellular location is the plastid. The protein is Small ribosomal subunit protein uS15c (rps15) of Cuscuta obtusiflora (Peruvian dodder).